The sequence spans 324 residues: Cytochrome c biogenesis protein CcsA (324 aa).

A run of 8 helical transmembrane segments spans residues 17-37 (IISVVIIIQLMTFFVHEIPAL), 44-64 (GMIATFLSITGLLIIRWIYSG), 68-88 (LSNLYESLMFLSWSFAIIHMI), 99-119 (YLSAITIPSAIFTQAFATSGL), 145-165 (MLLSYAALLVGSLFSIALLVI), 230-250 (VISIGFSFLTIGILSGAVWAN), 264-278 (TWAFITWTIYAIYSH), and 291-311 (AIVASIGFFIIWICYFGVNLL).

It belongs to the CcmF/CycK/Ccl1/NrfE/CcsA family. In terms of assembly, may interact with Ccs1.

The protein resides in the plastid. Its subcellular location is the chloroplast thylakoid membrane. Its function is as follows. Required during biogenesis of c-type cytochromes (cytochrome c6 and cytochrome f) at the step of heme attachment. The protein is Cytochrome c biogenesis protein CcsA of Lemna minor (Common duckweed).